Here is a 153-residue protein sequence, read N- to C-terminus: uncharacterized protein (153 aa).

Ala2 carries the N-acetylalanine modification.

This is an uncharacterized protein from Arabidopsis thaliana (Mouse-ear cress).